The sequence spans 122 residues: Large ribosomal subunit protein uL14 (122 aa).

This sequence belongs to the universal ribosomal protein uL14 family. In terms of assembly, part of the 50S ribosomal subunit. Forms a cluster with proteins L3 and L19. In the 70S ribosome, L14 and L19 interact and together make contacts with the 16S rRNA in bridges B5 and B8.

Functionally, binds to 23S rRNA. Forms part of two intersubunit bridges in the 70S ribosome. The sequence is that of Large ribosomal subunit protein uL14 from Paraburkholderia phytofirmans (strain DSM 17436 / LMG 22146 / PsJN) (Burkholderia phytofirmans).